Consider the following 843-residue polypeptide: MPLSYQHFRKLLLLDDEAGPLEEELPRLADEGLNRRVAEDLNLGNLNVSIPWTHKVGNFTGLYSSTVPVFNPEWQTPSFPHIHLQEDIINRCQQYVGPLTVNEKRRLKLIMPARFYPNLTKYLPLDKGIKPYYPEHAVNHYFKTRHYLHTLWKAGILYKRETTRSASFCGSPYSWEQELQHGRLVFQTSTRHGDESFCSQSSGILSRSPVGPCVRSQLKQSRLGLQPQQGSMARGKSGRSGSIRARVHPTTRRSFGVEPSGSGHIDNSASSTSSCLHQSAVRKTAYSHLSTSKRQSSSGHAVEFHNIPPSSARSQSEGPIFSCWWLQFRNSKPCSDYCLTHIVNLLEDWGPCTEHGEHNIRIPRTPARVTGGVFLVDKNPHNTTESRLVVDFSQFSRGSTHVSWPKFAVPNLQSLTNLLSSNLSWLSLDVSAAFYHIPLHPAAMPHLLVGSSGLPRYVARLSSTSRNINHQHGAMQDLHDSCSRNLYVSLLLLYKTFGRKLHLYSHPIILGFRKIPMGVGLSPFLLAQFTSAICSVVRRAFPHCLAFSYMDDVVLGAKSVQHLESLFTSITNFLLSLGIHLNPNKTKRWGYSLNFMGYVIGSWGTLPQEHIVLKLKQCFRKLPVNSPIDWKVCQRIVGLLGFAAPFTQCGYPALMPLYACIQSKQAFTFSPTYKAFLCKQYLNLYPVARQRSGLCQVFADATPTGWGLAIGHRRMRGTFVAPLPIHTAELLAACFARSRSGAKLIGTDNSVVLSRKYTSFPWLLGCAANWILRGTSFVYVPSALNPADDPSRGRLGLYRPLLLLPFRPTTGRTSLYAVSPSVPSHLPDRVHFASPLHVAWRPP.

The segment at 1–177 (MPLSYQHFRK…FCGSPYSWEQ (177 aa)) is terminal protein domain (TP). The tract at residues 178 to 346 (ELQHGRLVFQ…YCLTHIVNLL (169 aa)) is spacer. 2 disordered regions span residues 220 to 273 (QSRL…SSTS) and 289 to 316 (LSTS…RSQS). Over residues 289–299 (LSTSKRQSSSG) the composition is skewed to polar residues. Residues 347-690 (EDWGPCTEHG…YLNLYPVARQ (344 aa)) are polymerase/reverse transcriptase domain (RT). Residues 357–600 (EHNIRIPRTP…YSLNFMGYVI (244 aa)) form the Reverse transcriptase domain. Mg(2+) contacts are provided by Asp429, Asp551, and Asp552.

Belongs to the hepadnaviridae P protein family.

It carries out the reaction DNA(n) + a 2'-deoxyribonucleoside 5'-triphosphate = DNA(n+1) + diphosphate. The catalysed reaction is Endonucleolytic cleavage to 5'-phosphomonoester.. Activated by host HSP70 and HSP40 in vitro to be able to bind the epsilon loop of the pgRNA. Because deletion of the RNase H region renders the protein partly chaperone-independent, the chaperones may be needed indirectly to relieve occlusion of the RNA-binding site by this domain. Inhibited by several reverse-transcriptase inhibitors: Lamivudine, Adefovir and Entecavir. Functionally, multifunctional enzyme that converts the viral RNA genome into dsDNA in viral cytoplasmic capsids. This enzyme displays a DNA polymerase activity that can copy either DNA or RNA templates, and a ribonuclease H (RNase H) activity that cleaves the RNA strand of RNA-DNA heteroduplexes in a partially processive 3'- to 5'-endonucleasic mode. Neo-synthesized pregenomic RNA (pgRNA) are encapsidated together with the P protein, and reverse-transcribed inside the nucleocapsid. Initiation of reverse-transcription occurs first by binding the epsilon loop on the pgRNA genome, and is initiated by protein priming, thereby the 5'-end of (-)DNA is covalently linked to P protein. Partial (+)DNA is synthesized from the (-)DNA template and generates the relaxed circular DNA (RC-DNA) genome. After budding and infection, the RC-DNA migrates in the nucleus, and is converted into a plasmid-like covalently closed circular DNA (cccDNA). The activity of P protein does not seem to be necessary for cccDNA generation, and is presumably released from (+)DNA by host nuclear DNA repair machinery. This Hepatitis B virus genotype C subtype ad (isolate Japan/S-179/1988) (HBV-C) protein is Protein P.